The sequence spans 403 residues: S-adenosylmethionine synthase (403 aa).

Residue H17 participates in ATP binding. D19 is a binding site for Mg(2+). E45 serves as a coordination point for K(+). Positions 58 and 104 each coordinate L-methionine. The segment at 104–114 (QSSDIAQGVNT) is flexible loop. ATP is bound by residues 179 to 181 (DGK), 250 to 251 (KF), D259, 265 to 266 (RK), A282, and K286. D259 serves as a coordination point for L-methionine. An L-methionine-binding site is contributed by K290.

It belongs to the AdoMet synthase family. Homotetramer; dimer of dimers. It depends on Mg(2+) as a cofactor. The cofactor is K(+).

The protein localises to the cytoplasm. It catalyses the reaction L-methionine + ATP + H2O = S-adenosyl-L-methionine + phosphate + diphosphate. The protein operates within amino-acid biosynthesis; S-adenosyl-L-methionine biosynthesis; S-adenosyl-L-methionine from L-methionine: step 1/1. Catalyzes the formation of S-adenosylmethionine (AdoMet) from methionine and ATP. The overall synthetic reaction is composed of two sequential steps, AdoMet formation and the subsequent tripolyphosphate hydrolysis which occurs prior to release of AdoMet from the enzyme. The chain is S-adenosylmethionine synthase from Mycobacterium leprae (strain Br4923).